The sequence spans 263 residues: H-2 class II histocompatibility antigen, A-S beta chain (263 aa).

Residues 1–27 (MALQIPSLLLSAAVVVLMVLSSPGTEG) form the signal peptide. The tract at residues 28–120 (GDSERHFVFQ…VETHTSLRRL (93 aa)) is beta-1. Residues 28–224 (GDSERHFVFQ…RAQSESARSK (197 aa)) lie on the Extracellular side of the membrane. 2 disulfides stabilise this stretch: Cys-42–Cys-104 and Cys-143–Cys-199. N-linked (GlcNAc...) asparagine glycosylation occurs at Asn-46. Residues 121 to 214 (EQPNVVISLS…SLKSPITVEW (94 aa)) are beta-2. The Ig-like C1-type domain occupies 123 to 211 (PNVVISLSRT…EHPSLKSPIT (89 aa)). A connecting peptide region spans residues 215 to 224 (RAQSESARSK). A helical transmembrane segment spans residues 225–245 (MLSGIGGCVLGVIFLGLGLFI). Over 246–263 (RHRSQKGPRGPPPAGLLQ) the chain is Cytoplasmic.

This sequence belongs to the MHC class II family. Ubiquitinated in immature dendritic cells leading to down-regulation of MHC class II.

It is found in the membrane. This chain is H-2 class II histocompatibility antigen, A-S beta chain (H2-Ab1), found in Mus musculus (Mouse).